A 105-amino-acid polypeptide reads, in one-letter code: Small ribosomal subunit protein uS10 (105 aa).

The protein belongs to the universal ribosomal protein uS10 family. In terms of assembly, part of the 30S ribosomal subunit.

Functionally, involved in the binding of tRNA to the ribosomes. In Bdellovibrio bacteriovorus (strain ATCC 15356 / DSM 50701 / NCIMB 9529 / HD100), this protein is Small ribosomal subunit protein uS10.